The following is a 242-amino-acid chain: MAGHSKWANIKHKKAAADAKRGKIWTRLIKEIQVAARLGGGDANSNPRLRLAVDKAADANMPKDNVKRAIDRGVGGADGANYEEIRYEGYGIGGAAIIVDTLTDNRTRTVAEVRHAFSKFGGNMGTDGSVAFMFDHVGQFLFAPGTSEDALMEAALEAGANDVNTNDDGSIEVLCDWQEFSKVKDALEAGGFKAELAEVTMKPQNEIEFTGEDAVKMQKLLDALENLDDVQDVYTNAVVIEE.

Belongs to the TACO1 family.

It localises to the cytoplasm. The sequence is that of Probable transcriptional regulatory protein BTH_I1015 from Burkholderia thailandensis (strain ATCC 700388 / DSM 13276 / CCUG 48851 / CIP 106301 / E264).